We begin with the raw amino-acid sequence, 85 residues long: Neurotoxin beta-KTx 14.3 (85 aa).

Positions 1–20 are cleaved as a signal peptide; that stretch reads MKQYIFFLALIVLTATFAEA. A propeptide spanning residues 21-37 is cleaved from the precursor; the sequence is GKKTEILDKVKKVFSKG. Residues 49 to 85 enclose the BetaSPN-type CS-alpha/beta domain; that stretch reads ELGCPFIEKWCEDHCESKKQVGKCENFDCSCVKLGGK. 3 disulfides stabilise this stretch: C52–C72, C59–C77, and C63–C79.

This sequence belongs to the long chain scorpion toxin family. Class 2 subfamily. As to expression, expressed by the venom gland.

Its subcellular location is the secreted. Functionally, toxin with activity on voltage-gated potassium channels. Moderately and reversibly blocks up to 50% of the activity of Kv7.1/KCNQ1 (tested at 22 uM). 3D-structure modeling of the KCNQ1-toxin complex shows that the toxin interacts with the channel pore domain. Additionally, shows a very weak effect to block voltage-gated potassium channel Kv1.1/KCNA1. Has a very weak effect to block voltage-gated potassium channel Kv1.1/KCNA1. This is Neurotoxin beta-KTx 14.3 from Lychas mucronatus (Chinese swimming scorpion).